The sequence spans 490 residues: 53 kDa membrane antigen A (490 aa).

A signal peptide spans 1-16; it reads MKKKLFFALLVLILSS. Cys-17 carries N-palmitoyl cysteine lipidation. Cys-17 carries the S-diacylglycerol cysteine lipid modification.

It localises to the cell membrane. In Treponema denticola, this protein is 53 kDa membrane antigen A (tdpA).